We begin with the raw amino-acid sequence, 450 residues long: Phosphoglucosamine mutase (450 aa).

The Phosphoserine intermediate role is filled by Ser-102. Ser-102, Asp-243, Asp-245, and Asp-247 together coordinate Mg(2+). Ser-102 bears the Phosphoserine mark.

Belongs to the phosphohexose mutase family. Mg(2+) is required as a cofactor. In terms of processing, activated by phosphorylation.

The catalysed reaction is alpha-D-glucosamine 1-phosphate = D-glucosamine 6-phosphate. In terms of biological role, catalyzes the conversion of glucosamine-6-phosphate to glucosamine-1-phosphate. The protein is Phosphoglucosamine mutase of Mesorhizobium japonicum (strain LMG 29417 / CECT 9101 / MAFF 303099) (Mesorhizobium loti (strain MAFF 303099)).